A 311-amino-acid chain; its full sequence is Malate dehydrogenase (311 aa).

Residues 7 to 13 (GAAGGIG) and Asp-34 contribute to the NAD(+) site. Arg-81 and Arg-87 together coordinate substrate. Residues Asn-94 and 117–119 (ITN) contribute to the NAD(+) site. Substrate-binding residues include Asn-119 and Arg-153. His-177 functions as the Proton acceptor in the catalytic mechanism. Residue Met-227 coordinates NAD(+).

It belongs to the LDH/MDH superfamily. MDH type 1 family. As to quaternary structure, homodimer.

It catalyses the reaction (S)-malate + NAD(+) = oxaloacetate + NADH + H(+). Catalyzes the reversible oxidation of malate to oxaloacetate. This Erwinia tasmaniensis (strain DSM 17950 / CFBP 7177 / CIP 109463 / NCPPB 4357 / Et1/99) protein is Malate dehydrogenase.